Consider the following 318-residue polypeptide: Nucleotide-binding protein Jann_0539 (318 aa).

ATP is bound at residue 17 to 24 (GPSGAGRS). 64–67 (DPRT) serves as a coordination point for GTP. Positions 278-318 (GWQVSKRHRDVDKDASENSDRDRGASARTAASTDDGEAEQP) are disordered. Over residues 286–302 (RDVDKDASENSDRDRGA) the composition is skewed to basic and acidic residues.

It belongs to the RapZ-like family.

Its function is as follows. Displays ATPase and GTPase activities. The polypeptide is Nucleotide-binding protein Jann_0539 (Jannaschia sp. (strain CCS1)).